The following is a 54-amino-acid chain: Large ribosomal subunit protein bL33A (54 aa).

It belongs to the bacterial ribosomal protein bL33 family.

This chain is Large ribosomal subunit protein bL33A, found in Mycolicibacterium paratuberculosis (strain ATCC BAA-968 / K-10) (Mycobacterium paratuberculosis).